We begin with the raw amino-acid sequence, 100 residues long: Aspartyl/glutamyl-tRNA(Asn/Gln) amidotransferase subunit C (100 aa).

This sequence belongs to the GatC family. As to quaternary structure, heterotrimer of A, B and C subunits.

It catalyses the reaction L-glutamyl-tRNA(Gln) + L-glutamine + ATP + H2O = L-glutaminyl-tRNA(Gln) + L-glutamate + ADP + phosphate + H(+). It carries out the reaction L-aspartyl-tRNA(Asn) + L-glutamine + ATP + H2O = L-asparaginyl-tRNA(Asn) + L-glutamate + ADP + phosphate + 2 H(+). In terms of biological role, allows the formation of correctly charged Asn-tRNA(Asn) or Gln-tRNA(Gln) through the transamidation of misacylated Asp-tRNA(Asn) or Glu-tRNA(Gln) in organisms which lack either or both of asparaginyl-tRNA or glutaminyl-tRNA synthetases. The reaction takes place in the presence of glutamine and ATP through an activated phospho-Asp-tRNA(Asn) or phospho-Glu-tRNA(Gln). In Streptococcus mutans serotype c (strain ATCC 700610 / UA159), this protein is Aspartyl/glutamyl-tRNA(Asn/Gln) amidotransferase subunit C.